A 515-amino-acid chain; its full sequence is Galactose/methyl galactoside import ATP-binding protein MglA (515 aa).

ABC transporter domains lie at 8 to 243 (LEMR…VGRE) and 254 to 499 (IPKE…AKYL). Residue 40 to 47 (GENGAGKS) coordinates ATP.

This sequence belongs to the ABC transporter superfamily. Galactose/methyl galactoside importer (TC 3.A.1.2.3) family. The complex is composed of one ATP-binding protein (MglA), two transmembrane proteins (MglC) and a solute-binding protein (MglB).

It is found in the cell membrane. It carries out the reaction D-galactose(out) + ATP + H2O = D-galactose(in) + ADP + phosphate + H(+). The enzyme catalyses methyl beta-D-galactoside(out) + ATP + H2O = methyl beta-D-galactoside(in) + ADP + phosphate + H(+). Functionally, part of the ABC transporter complex MglABC involved in galactose/methyl galactoside import. Responsible for energy coupling to the transport system. This Clostridium perfringens (strain ATCC 13124 / DSM 756 / JCM 1290 / NCIMB 6125 / NCTC 8237 / Type A) protein is Galactose/methyl galactoside import ATP-binding protein MglA.